Consider the following 407-residue polypeptide: ATP-citrate synthase subunit alpha chain protein 1 (407 aa).

Citrate-binding residues include Asn-327, Thr-329, and Arg-360.

It belongs to the succinate/malate CoA ligase beta subunit family. As to quaternary structure, heterooctamer of 4 alpha and 4 beta chains.

Its subcellular location is the cytoplasm. The protein localises to the cytosol. It catalyses the reaction oxaloacetate + acetyl-CoA + ADP + phosphate = citrate + ATP + CoA. Functionally, ATP citrate-lyase is the primary enzyme responsible for the synthesis of cytosolic acetyl-CoA, used for the elongation of fatty acids and biosynthesis of isoprenoids, flavonoids and malonated derivatives. May supply substrate to the cytosolic acetyl-CoA carboxylase, which generates the malonyl-CoA used for the synthesis of a multitude of compounds, including very long chain fatty acids and flavonoids. In contrast to all known animal ACL enzymes having a homomeric structure, plant ACLs are composed of alpha and beta chains. This Oryza sativa subsp. japonica (Rice) protein is ATP-citrate synthase subunit alpha chain protein 1 (ACLA-1).